We begin with the raw amino-acid sequence, 378 residues long: DNA replication and repair protein RecF (378 aa).

31 to 38 (GENGSGKT) is a binding site for ATP.

It belongs to the RecF family.

Its subcellular location is the cytoplasm. In terms of biological role, the RecF protein is involved in DNA metabolism; it is required for DNA replication and normal SOS inducibility. RecF binds preferentially to single-stranded, linear DNA. It also seems to bind ATP. This Teredinibacter turnerae (strain ATCC 39867 / T7901) protein is DNA replication and repair protein RecF.